Here is a 648-residue protein sequence, read N- to C-terminus: Macrolide export ATP-binding/permease protein MacB (648 aa).

The ABC transporter domain maps to 5–243; that stretch reads LELKDIRRSY…AGGTEPVVNT (239 aa). 41 to 48 serves as a coordination point for ATP; sequence GASGSGKS. The next 4 helical transmembrane spans lie at 273 to 293, 523 to 543, 576 to 596, and 600 to 620; these read LLTM…VVVG, LFLT…VMNI, AVLV…LIAF, and LFLP…AFLC.

It belongs to the ABC transporter superfamily. Macrolide exporter (TC 3.A.1.122) family. As to quaternary structure, homodimer. Part of the tripartite efflux system MacAB-TolC, which is composed of an inner membrane transporter, MacB, a periplasmic membrane fusion protein, MacA, and an outer membrane component, TolC. The complex forms a large protein conduit and can translocate molecules across both the inner and outer membranes. Interacts with MacA.

It is found in the cell inner membrane. Functionally, part of the tripartite efflux system MacAB-TolC. MacB is a non-canonical ABC transporter that contains transmembrane domains (TMD), which form a pore in the inner membrane, and an ATP-binding domain (NBD), which is responsible for energy generation. Confers resistance against macrolides. The chain is Macrolide export ATP-binding/permease protein MacB from Shigella boydii serotype 4 (strain Sb227).